A 159-amino-acid polypeptide reads, in one-letter code: Transcription elongation factor GreA (159 aa).

Residues 2-77 adopt a coiled-coil conformation; it reads EENKEFLLTQ…LENMVRKAVI (76 aa).

The protein belongs to the GreA/GreB family.

Its function is as follows. Necessary for efficient RNA polymerase transcription elongation past template-encoded arresting sites. The arresting sites in DNA have the property of trapping a certain fraction of elongating RNA polymerases that pass through, resulting in locked ternary complexes. Cleavage of the nascent transcript by cleavage factors such as GreA or GreB allows the resumption of elongation from the new 3'terminus. GreA releases sequences of 2 to 3 nucleotides. This chain is Transcription elongation factor GreA, found in Clostridioides difficile (strain 630) (Peptoclostridium difficile).